A 345-amino-acid polypeptide reads, in one-letter code: MVAALLGGGGEARGGTVPGAWLCLMALLQLLGSAPRGSGLAHGRRLICWQALLQCQGEPECSYAYNQYAEACAPVLAQHGGGDAPGAAAAAFPASAASFSSRWRCPSHCISALIQLNHTRRGPALEDCDCAQDENCKSTKRAIEPCLPRTSGGGAGGPGAGGVMGCTEARRRCDRDSRCNLALSRYLTYCGKVFNGLRCTDECRTVIEDMLAMPKAALLNDCVCDGLERPICESVKENMARLCFGAELGNGPGSSGSDGGLDDYYDEDYDDEQRTGGAGGEQPLDDDDGVPHPPRPGSGAAASGGRGDLPYGPGRRSSGGGGRLAPRGAWTPLASILLLLLGPLF.

Positions 1 to 39 (MVAALLGGGGEARGGTVPGAWLCLMALLQLLGSAPRGSG) are cleaved as a signal peptide. N-linked (GlcNAc...) asparagine glycosylation occurs at Asn-117. The interval 254–328 (SSGSDGGLDD…GGGGRLAPRG (75 aa)) is disordered. Residues 260–271 (GLDDYYDEDYDD) show a composition bias toward acidic residues. The GPI-anchor amidated serine moiety is linked to residue Ser-318. Positions 319-345 (GGGGRLAPRGAWTPLASILLLLLGPLF) are cleaved as a propeptide — removed in mature form.

Its subcellular location is the cell membrane. Its function is as follows. Specific growth arrest protein involved in growth suppression. Blocks entry to S phase. Prevents cycling of normal and transformed cells. Binds 20(S)-hydroxycholesterol (20(S)-OHC). The polypeptide is Growth arrest-specific protein 1 (GAS1) (Homo sapiens (Human)).